We begin with the raw amino-acid sequence, 281 residues long: Pantothenate synthetase (281 aa).

30 to 37 (MGYYHAGH) provides a ligand contact to ATP. His-37 acts as the Proton donor in catalysis. Gln-61 provides a ligand contact to (R)-pantoate. Position 61 (Gln-61) interacts with beta-alanine. 147 to 150 (GEKD) contributes to the ATP binding site. Gln-153 is a binding site for (R)-pantoate. ATP is bound by residues Val-176 and 184–187 (MSSR).

It belongs to the pantothenate synthetase family. As to quaternary structure, homodimer.

The protein resides in the cytoplasm. The catalysed reaction is (R)-pantoate + beta-alanine + ATP = (R)-pantothenate + AMP + diphosphate + H(+). Its pathway is cofactor biosynthesis; (R)-pantothenate biosynthesis; (R)-pantothenate from (R)-pantoate and beta-alanine: step 1/1. In terms of biological role, catalyzes the condensation of pantoate with beta-alanine in an ATP-dependent reaction via a pantoyl-adenylate intermediate. The sequence is that of Pantothenate synthetase from Oleidesulfovibrio alaskensis (strain ATCC BAA-1058 / DSM 17464 / G20) (Desulfovibrio alaskensis).